A 370-amino-acid chain; its full sequence is GTPase Obg (370 aa).

The Obg domain occupies 1-159 (MKFIDEARIE…RKLKLELKVL (159 aa)). The segment at 129–148 (HFKSSTNRAPRQKTNGKSGE) is disordered. Residues 130–145 (FKSSTNRAPRQKTNGK) are compositionally biased toward polar residues. In terms of domain architecture, OBG-type G spans 160 to 334 (ADVGLLGMPN…LCYSLQDYLD (175 aa)). GTP is bound by residues 166 to 173 (GMPNAGKS), 191 to 195 (FTTLH), 213 to 216 (DIPG), 284 to 287 (NKVD), and 315 to 317 (SAL). Ser173 and Thr193 together coordinate Mg(2+).

It belongs to the TRAFAC class OBG-HflX-like GTPase superfamily. OBG GTPase family. Monomer. Mg(2+) is required as a cofactor.

Its subcellular location is the cytoplasm. An essential GTPase which binds GTP, GDP and possibly (p)ppGpp with moderate affinity, with high nucleotide exchange rates and a fairly low GTP hydrolysis rate. Plays a role in control of the cell cycle, stress response, ribosome biogenesis and in those bacteria that undergo differentiation, in morphogenesis control. The sequence is that of GTPase Obg from Polynucleobacter necessarius subsp. necessarius (strain STIR1).